Reading from the N-terminus, the 361-residue chain is Queuine tRNA-ribosyltransferase (361 aa).

The Proton acceptor role is filled by aspartate 92. Residues 92–96 (DSGGF), aspartate 146, glutamine 189, and glycine 216 contribute to the substrate site. The RNA binding stretch occupies residues 247–253 (GVGKPAD). Aspartate 266 functions as the Nucleophile in the catalytic mechanism. Residues 271–275 (TRSGR) are RNA binding; important for wobble base 34 recognition. 4 residues coordinate Zn(2+): cysteine 304, cysteine 306, cysteine 309, and histidine 335.

The protein belongs to the queuine tRNA-ribosyltransferase family. In terms of assembly, homodimer. Within each dimer, one monomer is responsible for RNA recognition and catalysis, while the other monomer binds to the replacement base PreQ1. The cofactor is Zn(2+).

It carries out the reaction 7-aminomethyl-7-carbaguanine + guanosine(34) in tRNA = 7-aminomethyl-7-carbaguanosine(34) in tRNA + guanine. Its pathway is tRNA modification; tRNA-queuosine biosynthesis. Functionally, catalyzes the base-exchange of a guanine (G) residue with the queuine precursor 7-aminomethyl-7-deazaguanine (PreQ1) at position 34 (anticodon wobble position) in tRNAs with GU(N) anticodons (tRNA-Asp, -Asn, -His and -Tyr). Catalysis occurs through a double-displacement mechanism. The nucleophile active site attacks the C1' of nucleotide 34 to detach the guanine base from the RNA, forming a covalent enzyme-RNA intermediate. The proton acceptor active site deprotonates the incoming PreQ1, allowing a nucleophilic attack on the C1' of the ribose to form the product. After dissociation, two additional enzymatic reactions on the tRNA convert PreQ1 to queuine (Q), resulting in the hypermodified nucleoside queuosine (7-(((4,5-cis-dihydroxy-2-cyclopenten-1-yl)amino)methyl)-7-deazaguanosine). This chain is Queuine tRNA-ribosyltransferase, found in Rickettsia rickettsii (strain Iowa).